The sequence spans 604 residues: Protein CBFA2T2 (604 aa).

The segment at 25-105 is disordered; that stretch reads KRVPAMPGSP…SSTSSALTNQ (81 aa). Serine 33 is subject to Phosphoserine. Lysine 38 is covalently cross-linked (Glycyl lysine isopeptide (Lys-Gly) (interchain with G-Cter in SUMO2)). Positions 46-59 are enriched in pro residues; the sequence is PTMPPLPPINPGGP. 2 stretches are compositionally biased toward polar residues: residues 64–79 and 88–105; these read FTPTALSNGINHSPPT and QRFSNGPASSTSSALTNQ. The segment at 107 to 215 is interaction with PRDM14; it reads LPATCGARQL…QHEHLLLNTS (109 aa). The 96-residue stretch at 113–208 folds into the TAFH domain; the sequence is ARQLSKLKRF…TPSQYLAQHE (96 aa). The interval 229–265 is disordered; it reads VHGNGKRPSPERREENSFDRDTIAPEPPAKRVCTISP. Basic and acidic residues predominate over residues 236–251; sequence PSPERREENSFDRDTI. Phosphoserine is present on serine 264. The tract at residues 331-377 is nervy homology region 2 (NHR2); sequence QDELVDHRLTEREWADEWKHLDHALNCIMEMVEKTRRSMAVLRRCQE. A disordered region spans residues 397-427; it reads RKTGTELVSRQHSPGSADSLSNDSQREFNSR. Polar residues predominate over residues 402–419; the sequence is ELVSRQHSPGSADSLSND. Residue serine 409 is modified to Phosphoserine. Positions 435–484 are nervy homology region 3 (NHR3); that stretch reads VEFWKKTEEAVNKVKIQAMSEVQKAVAEAEQKAFEVIATERARMEQTIAD. Lysine 449 is covalently cross-linked (Glycyl lysine isopeptide (Lys-Gly) (interchain with G-Cter in SUMO2)). The stretch at 451–491 forms a coiled coil; it reads QAMSEVQKAVAEAEQKAFEVIATERARMEQTIADVKRQAAE. Zn(2+) contacts are provided by cysteine 507, cysteine 510, cysteine 518, cysteine 521, cysteine 527, cysteine 531, histidine 539, and cysteine 543. The segment at 507–543 adopts an MYND-type zinc-finger fold; it reads CWNCGRKASETCSGCNIARYCGSFCQHKDWERHHRLC. The disordered stretch occupies residues 547-604; sequence LHGQSPHGQGRPLLPVGRGSSARSADCSVPSPALDKTSATTSRSSTPASVTAIDTNGL. A Phosphoserine modification is found at serine 577. Positions 583 to 598 are enriched in low complexity; sequence TSATTSRSSTPASVTA.

The protein belongs to the CBFA2T family. In terms of assembly, homooligomer. Homotetramerization is mediated by nervy homology region 2. Can interact with RUNX1T1/CBFA2T1 and CBFA2T3/MTG16; heterotetramerization between members of the CBFA2T family is proposed. Forms a heterooligomer with the AML1-MTG8/ETO fusion protein. Interacts with PRDM14. Interacts with RBPJ, GFI1, TCF4. Interacts with TAL1 and CBFA2T3/MTG16; the heteromer with CBFA2T3/MTG16 may function in repression of TAL1. As to expression, ubiquitously expressed in fetal and adult tissues. Highly expressed in adult brain, heart, lung, kidney, lymph node, appendix, thymus, testis, uterus, small intestine, prostate and thymus.

It is found in the nucleus. Functionally, transcriptional corepressor which facilitates transcriptional repression via its association with DNA-binding transcription factors and recruitment of other corepressors and histone-modifying enzymes. Via association with PRDM14 is involved in regulation of embryonic stem cell (ESC) pluripotency. Involved in primordial germ cell (PCG) formation. Stabilizes PRDM14 and OCT4 on chromatin in a homooligomerization-dependent manner. Can repress the expression of MMP7 in a ZBTB33-dependent manner. May function as a complex with the chimeric protein RUNX1/AML1-CBFA2T1/MTG8 (AML1-MTG8/ETO fusion protein) which is produced in acute myeloid leukemia with the chromosomal translocation t(8;21). May thus be involved in the repression of AML1-dependent transcription and the induction of G-CSF/CSF3-dependent cell growth. May be a tumor suppressor gene candidate involved in myeloid tumors with the deletion of the 20q11 region. Through heteromerization with CBFA2T3/MTG16 may be involved in regulation of the proliferation and the differentiation of erythroid progenitors by repressing the expression of TAL1 target genes. Required for the maintenance of the secretory cell lineage in the small intestine. Can inhibit Notch signaling probably by association with RBPJ and may be involved in GFI1-mediated Paneth cell differentiation. This chain is Protein CBFA2T2 (CBFA2T2), found in Homo sapiens (Human).